We begin with the raw amino-acid sequence, 365 residues long: Heat-inducible transcription repressor HrcA (365 aa).

The protein belongs to the HrcA family.

In terms of biological role, negative regulator of class I heat shock genes (grpE-dnaK-dnaJ and groELS operons). Prevents heat-shock induction of these operons. This Nodularia spumigena protein is Heat-inducible transcription repressor HrcA.